Consider the following 743-residue polypeptide: Zinc transporter ZIP6 (743 aa).

The N-terminal stretch at 1–20 is a signal peptide; the sequence is MARKLSVILILTFALSVTNP. Residues 21–313 lie on the Extracellular side of the membrane; that stretch reads LHELKAAAFP…PKTYSLQIAW (293 aa). A glycan (N-linked (GlcNAc...) asparagine) is linked at asparagine 67. Residues 96–116 are compositionally biased toward basic and acidic residues; the sequence is HEHHSDHEHHSDHEHHSDHEH. Disordered stretches follow at residues 96-174 and 190-245; these read HEHH…SASE and LETI…SRNT. The segment covering 117–132 has biased composition (basic residues); sequence HSHRNHAASGKNKRKA. Basic and acidic residues-rich tracts occupy residues 133-147 and 155-167; these read LCPD…KDPR and HRSE…RNVK. Residues 206–215 are compositionally biased toward polar residues; the sequence is VSSSTPPSVT. Residues 227-237 show a composition bias toward basic and acidic residues; sequence KTNESVSEPRK. Asparagine 229, asparagine 254, and asparagine 271 each carry an N-linked (GlcNAc...) asparagine glycan. A helical transmembrane segment spans residues 314-334; the sequence is VGGFIAISIISFLSLLGVILV. Topologically, residues 335–343 are cytoplasmic; that stretch reads PLMNRVFFK. Residues 344-364 traverse the membrane as a helical segment; the sequence is FLLSFLVALAVGTLSGDAFLH. The Extracellular portion of the chain corresponds to 365 to 411; sequence LLPHSHASHHHSHSHEEPAMEMKRGPLFSHLSSQNIEESAYFDSTWK. The helical transmembrane segment at 412-432 threads the bilayer; it reads GLTALGGLYFMFLVEHVLTLI. Residues 433 to 645 are Cytoplasmic-facing; the sequence is KQFKDKKKKN…LKAGMTVKQA (213 aa). A coiled-coil region spans residues 452-474; sequence VEIKKQLSKYESQLSTNEEKVDT. A phosphoserine mark is found at serine 459 and serine 466. Residues 646-666 traverse the membrane as a helical segment; the sequence is VLYNALSAMLAYLGMATGIFI. Residues 667-674 lie on the Extracellular side of the membrane; it reads GHYAENVS. N-linked (GlcNAc...) asparagine glycosylation is present at asparagine 672. A helical membrane pass occupies residues 675–695; sequence MWIFALTAGLFMYVALVDMVP. Residues 696-712 are Cytoplasmic-facing; it reads EMLHNDASDHGCSRWGY. Residues 713–733 form a helical membrane-spanning segment; that stretch reads FFLQNAGMLLGFGIMLLISIF. The Extracellular segment spans residues 734 to 743; sequence EHKIVFRINF.

It belongs to the ZIP transporter (TC 2.A.5) family. In terms of assembly, interacts with SLC39A10; which triggers cells to undergo EMT and mitosis. Found in a complex with SLC39A6, SLC39A10 and with the 'Ser-727' phosphorylated form of STAT3 throughout mitosis. Found in a complex with SLC39A6, SLC39A10 and with NCAM1; this complex controls NCAM1 phosphorylation and integration into focal adhesion complexes during epithelial-to-mesenchymal transition (EMT). Found in a complex with SLC39A6, SLC39A10 and with GSK3B that controls NCAM1 phosphorylation. Cleaved on the N-terminus before locating to the plasma membrane. Post-translationally, N-glycosylated. In terms of processing, phosphorylated by ZAP70 in response to TCR stimulation leading to its activation.

Its subcellular location is the cell membrane. The protein resides in the cell projection. It is found in the lamellipodium membrane. It localises to the membrane raft. The protein localises to the apical cell membrane. The catalysed reaction is Zn(2+)(in) = Zn(2+)(out). Zinc-influx transporter which plays a role in zinc homeostasis and in the induction of epithelial-to-mesenchymal transition (EMT). When associated with SLC39A10, the heterodimer formed by SLC39A10 and SLC39A6 mediates cellular zinc uptake to trigger cells to undergo epithelial- to-mesenchymal transition (EMT). The SLC39A10-SLC39A6 heterodimer also controls NCAM1 phosphorylation and its integration into focal adhesion complexes during EMT. Zinc influx inactivates GSK3B, enabling unphosphorylated SNAI1 in the nucleus to down-regulate adherence genes such as CDH1, causing loss of cell adherence. In addition, the SLC39A10-SLC39A6 heterodimer plays an essentiel role in initiating mitosis by importing zinc into cells to initiate a pathway resulting in the onset of mitosis. Participates in the T-cell receptor signaling regulation by mediating cellular zinc uptake into activated lymphocytes. Regulates the zinc influx necessary for proper meiotic progression to metaphase II (MII) that allows the oocyte-to-egg transition. The protein is Zinc transporter ZIP6 of Pongo abelii (Sumatran orangutan).